The following is a 55-amino-acid chain: Large ribosomal subunit protein bL33 (55 aa).

It belongs to the bacterial ribosomal protein bL33 family.

The chain is Large ribosomal subunit protein bL33 from Escherichia coli (strain K12 / DH10B).